The primary structure comprises 271 residues: Putative two-component membrane permease complex subunit SMU_746c (271 aa).

Helical transmembrane passes span 34–54 (LAYI…TIWM) and 70–90 (FFSP…PTVP).

Belongs to the UPF0703 family. As to quaternary structure, interacts with SMU_747c.

It localises to the cell membrane. In terms of biological role, could be part of a two-component membrane permease system responsible for amino acid transport under low pH. Involved in acidogenesis, biofilm formation and low-pH survival. In Streptococcus mutans serotype c (strain ATCC 700610 / UA159), this protein is Putative two-component membrane permease complex subunit SMU_746c.